Here is a 490-residue protein sequence, read N- to C-terminus: Betaine aldehyde dehydrogenase (490 aa).

Residues Ser26, Ile27, and Asp93 each contribute to the K(+) site. 150–152 (GAW) provides a ligand contact to NAD(+). The active-site Charge relay system is Lys162. 176–179 (KPSE) contacts NAD(+). Val180 serves as a coordination point for K(+). 230-233 (GTVT) lines the NAD(+) pocket. Leu246 provides a ligand contact to K(+). Glu252 serves as the catalytic Proton acceptor. Gly254, Cys286, and Glu387 together coordinate NAD(+). The active-site Nucleophile is Cys286. Position 286 is a cysteine sulfenic acid (-SOH) (Cys286). Lys457 and Gly460 together coordinate K(+). Residue Glu464 is the Charge relay system of the active site.

This sequence belongs to the aldehyde dehydrogenase family. In terms of assembly, dimer of dimers. Requires K(+) as cofactor.

The enzyme catalyses betaine aldehyde + NAD(+) + H2O = glycine betaine + NADH + 2 H(+). It functions in the pathway amine and polyamine biosynthesis; betaine biosynthesis via choline pathway; betaine from betaine aldehyde: step 1/1. Functionally, involved in the biosynthesis of the osmoprotectant glycine betaine. Catalyzes the irreversible oxidation of betaine aldehyde to the corresponding acid. The polypeptide is Betaine aldehyde dehydrogenase (Ectopseudomonas mendocina (strain ymp) (Pseudomonas mendocina)).